The following is a 74-amino-acid chain: Conotoxin Cal27 (74 aa).

An N-terminal signal peptide occupies residues methionine 1–alanine 19.

Post-translationally, may contain 4 disulfide bonds. In terms of tissue distribution, expressed by the venom duct.

Its subcellular location is the secreted. Its function is as follows. Probable neurotoxin. The chain is Conotoxin Cal27 from Californiconus californicus (California cone).